Here is a 238-residue protein sequence, read N- to C-terminus: Probable transcriptional regulatory protein CAB166 (238 aa).

Belongs to the TACO1 family.

The protein localises to the cytoplasm. In Chlamydia abortus (strain DSM 27085 / S26/3) (Chlamydophila abortus), this protein is Probable transcriptional regulatory protein CAB166.